A 275-amino-acid polypeptide reads, in one-letter code: 4-hydroxy-3-methylbut-2-enyl diphosphate reductase (275 aa).

Cys-12 serves as a coordination point for [4Fe-4S] cluster. Residues His-36 and His-70 each coordinate (2E)-4-hydroxy-3-methylbut-2-enyl diphosphate. 2 residues coordinate dimethylallyl diphosphate: His-36 and His-70. Residues His-36 and His-70 each coordinate isopentenyl diphosphate. Residue Cys-92 participates in [4Fe-4S] cluster binding. Residue His-120 coordinates (2E)-4-hydroxy-3-methylbut-2-enyl diphosphate. His-120 contacts dimethylallyl diphosphate. His-120 serves as a coordination point for isopentenyl diphosphate. The active-site Proton donor is the Glu-122. Thr-158 serves as a coordination point for (2E)-4-hydroxy-3-methylbut-2-enyl diphosphate. Residue Cys-186 coordinates [4Fe-4S] cluster. Positions 214, 215, 216, and 258 each coordinate (2E)-4-hydroxy-3-methylbut-2-enyl diphosphate. Residues Ser-214, Ser-215, Asn-216, and Ser-258 each contribute to the dimethylallyl diphosphate site. Residues Ser-214, Ser-215, Asn-216, and Ser-258 each coordinate isopentenyl diphosphate.

It belongs to the IspH family. [4Fe-4S] cluster is required as a cofactor.

It catalyses the reaction isopentenyl diphosphate + 2 oxidized [2Fe-2S]-[ferredoxin] + H2O = (2E)-4-hydroxy-3-methylbut-2-enyl diphosphate + 2 reduced [2Fe-2S]-[ferredoxin] + 2 H(+). It carries out the reaction dimethylallyl diphosphate + 2 oxidized [2Fe-2S]-[ferredoxin] + H2O = (2E)-4-hydroxy-3-methylbut-2-enyl diphosphate + 2 reduced [2Fe-2S]-[ferredoxin] + 2 H(+). It participates in isoprenoid biosynthesis; dimethylallyl diphosphate biosynthesis; dimethylallyl diphosphate from (2E)-4-hydroxy-3-methylbutenyl diphosphate: step 1/1. It functions in the pathway isoprenoid biosynthesis; isopentenyl diphosphate biosynthesis via DXP pathway; isopentenyl diphosphate from 1-deoxy-D-xylulose 5-phosphate: step 6/6. Its function is as follows. Catalyzes the conversion of 1-hydroxy-2-methyl-2-(E)-butenyl 4-diphosphate (HMBPP) into a mixture of isopentenyl diphosphate (IPP) and dimethylallyl diphosphate (DMAPP). Acts in the terminal step of the DOXP/MEP pathway for isoprenoid precursor biosynthesis. The protein is 4-hydroxy-3-methylbut-2-enyl diphosphate reductase of Sulfurimonas denitrificans (strain ATCC 33889 / DSM 1251) (Thiomicrospira denitrificans (strain ATCC 33889 / DSM 1251)).